We begin with the raw amino-acid sequence, 567 residues long: TGF-beta receptor type-2 (567 aa).

A signal peptide spans 1–23 (MGRGLLRGLWPLHIVLWTRIAST). Residues 24-166 (IPPHVPKSVN…SPDLLLVIIQ (143 aa)) are Extracellular-facing. Intrachain disulfides connect Cys-51-Cys-84, Cys-54-Cys-71, Cys-61-Cys-67, Cys-77-Cys-101, Cys-121-Cys-136, and Cys-138-Cys-143. Asn-70 and Asn-94 each carry an N-linked (GlcNAc...) asparagine glycan. Residues 167 to 187 (VTGVSLLPPLGIAIAVIIIFY) traverse the membrane as a helical segment. At 188-567 (CYRVHRQQKL…PEDGSLNTTK (380 aa)) the chain is on the cytoplasmic side. The Protein kinase domain occupies 244–546 (IELDTLVGKG…RFSELEHPER (303 aa)). Residues 250-258 (VGKGRFAEV) and Lys-277 contribute to the ATP site. The active-site Proton acceptor is the Asp-379. Ser-409, Ser-548, and Ser-553 each carry phosphoserine. The interval 545–567 (ERLSGRSCSQEKIPEDGSLNTTK) is disordered.

The protein belongs to the protein kinase superfamily. TKL Ser/Thr protein kinase family. TGFB receptor subfamily. In terms of assembly, homodimer. Heterohexamer; TGFB1, TGFB2 and TGFB3 homodimeric ligands assemble a functional receptor composed of two TGFBR1 and TGFBR2 heterodimers to form a ligand-receptor heterohexamer. The respective affinity of TGFRB1 and TGFRB2 for the ligands may modulate the kinetics of assembly of the receptor and may explain the different biological activities of TGFB1, TGFB2 and TGFB3. Component of a complex composed of TSC22D1 (via N-terminus), TGFBR1 and TGFBR2; the interaction between TSC22D1 and TGFBR1 is inhibited by SMAD7 and promoted by TGFB1. Interacts with DAXX. Interacts with DYNLT4. Interacts with ZFYVE9; ZFYVE9 recruits SMAD2 and SMAD3 to the TGF-beta receptor. Interacts with and is activated by SCUBE3; this interaction does not affect TGFB1-binding to TGFBR2. Interacts with VPS39; this interaction is independent of the receptor kinase activity and of the presence of TGF-beta. Interacts with CLU. It depends on Mg(2+) as a cofactor. Requires Mn(2+) as cofactor. Phosphorylated on a Ser/Thr residue in the cytoplasmic domain. As to expression, widely expressed in adult. Expressed primarily in mesenchyme and epidermis of the midgestational fetus.

It localises to the cell membrane. Its subcellular location is the membrane raft. It carries out the reaction L-threonyl-[receptor-protein] + ATP = O-phospho-L-threonyl-[receptor-protein] + ADP + H(+). The enzyme catalyses L-seryl-[receptor-protein] + ATP = O-phospho-L-seryl-[receptor-protein] + ADP + H(+). Transmembrane serine/threonine kinase forming with the TGF-beta type I serine/threonine kinase receptor, TGFBR1, the non-promiscuous receptor for the TGF-beta cytokines TGFB1, TGFB2 and TGFB3. Transduces the TGFB1, TGFB2 and TGFB3 signal from the cell surface to the cytoplasm and is thus regulating a plethora of physiological and pathological processes including cell cycle arrest in epithelial and hematopoietic cells, control of mesenchymal cell proliferation and differentiation, wound healing, extracellular matrix production, immunosuppression and carcinogenesis. The formation of the receptor complex composed of 2 TGFBR1 and 2 TGFBR2 molecules symmetrically bound to the cytokine dimer results in the phosphorylation and the activation of TGFRB1 by the constitutively active TGFBR2. Activated TGFBR1 phosphorylates SMAD2 which dissociates from the receptor and interacts with SMAD4. The SMAD2-SMAD4 complex is subsequently translocated to the nucleus where it modulates the transcription of the TGF-beta-regulated genes. This constitutes the canonical SMAD-dependent TGF-beta signaling cascade. Also involved in non-canonical, SMAD-independent TGF-beta signaling pathways. Its function is as follows. Has transforming growth factor beta-activated receptor activity. The protein is TGF-beta receptor type-2 (Tgfbr2) of Mus musculus (Mouse).